A 458-amino-acid polypeptide reads, in one-letter code: Translation initiation factor eIF2B subunit gamma (458 aa).

Ser-291 carries the post-translational modification Phosphoserine.

Belongs to the eIF-2B gamma/epsilon subunits family. Component of the translation initiation factor 2B (eIF2B) complex which is a heterodecamer of two sets of five different subunits: alpha, beta, gamma, delta and epsilon. Subunits alpha, beta and delta comprise a regulatory subcomplex and subunits epsilon and gamma comprise a catalytic subcomplex. Within the complex, the hexameric regulatory complex resides at the center, with the two heterodimeric catalytic subcomplexes bound on opposite sides.

The protein localises to the cytoplasm. Its subcellular location is the cytosol. Its function is as follows. Acts as a component of the translation initiation factor 2B (eIF2B) complex, which catalyzes the exchange of GDP for GTP on the eukaryotic initiation factor 2 (eIF2) complex gamma subunit. Its guanine nucleotide exchange factor activity is repressed when bound to eIF2 complex phosphorylated on the alpha subunit, thereby limiting the amount of methionyl-initiator methionine tRNA available to the ribosome and consequently global translation is repressed. This chain is Translation initiation factor eIF2B subunit gamma (tif223), found in Schizosaccharomyces pombe (strain 972 / ATCC 24843) (Fission yeast).